The primary structure comprises 83 residues: Parvalbumin beta 3 (83 aa).

EF-hand domains are found at residues 13–48 and 52–83; these read KSNDDVKKAFFVIDQDKSGFIEEDELKLFLQNFSAG and LTAGETKTFLAAGDSDGDGMIGVDEFQALVKA. Aspartate 26, aspartate 28, serine 30, phenylalanine 32, glutamate 34, glutamate 37, aspartate 65, aspartate 67, aspartate 69, methionine 71, and glutamate 76 together coordinate Ca(2+).

This sequence belongs to the parvalbumin family.

In terms of biological role, in muscle, parvalbumin is thought to be involved in relaxation after contraction. It binds two calcium ions. The sequence is that of Parvalbumin beta 3 from Macruronus novaezelandiae (Blue grenadier).